Reading from the N-terminus, the 596-residue chain is Chitooligosaccharidolytic beta-N-acetylglucosaminidase (596 aa).

An N-terminal signal peptide occupies residues 1-23 (MWLQAICIYTVFIIIGCGIPTAA). Residues asparagine 166, asparagine 264, and asparagine 377 are each glycosylated (N-linked (GlcNAc...) asparagine).

It belongs to the glycosyl hydrolase 20 family.

It carries out the reaction Hydrolysis of terminal non-reducing N-acetyl-D-hexosamine residues in N-acetyl-beta-D-hexosaminides.. In terms of biological role, active during metamorphosis to degrade chitin. This chain is Chitooligosaccharidolytic beta-N-acetylglucosaminidase, found in Bombyx mori (Silk moth).